Reading from the N-terminus, the 124-residue chain is Large ribosomal subunit protein bL12 (124 aa).

The protein belongs to the bacterial ribosomal protein bL12 family. Homodimer. Part of the ribosomal stalk of the 50S ribosomal subunit. Forms a multimeric L10(L12)X complex, where L10 forms an elongated spine to which 2 to 4 L12 dimers bind in a sequential fashion. Binds GTP-bound translation factors.

Forms part of the ribosomal stalk which helps the ribosome interact with GTP-bound translation factors. Is thus essential for accurate translation. This chain is Large ribosomal subunit protein bL12, found in Burkholderia mallei (strain NCTC 10247).